We begin with the raw amino-acid sequence, 388 residues long: Peptide chain release factor subunit 1 (388 aa).

The protein belongs to the eukaryotic release factor 1 family. In terms of assembly, heterodimer of two subunits, one of which binds GTP.

The protein localises to the cytoplasm. Its function is as follows. Directs the termination of nascent peptide synthesis (translation) in response to the termination codons UAA, UAG and UGA. This is Peptide chain release factor subunit 1 (prf1) from Pyrobaculum aerophilum (strain ATCC 51768 / DSM 7523 / JCM 9630 / CIP 104966 / NBRC 100827 / IM2).